The following is a 939-amino-acid chain: Valine--tRNA ligase (939 aa).

The short motif at 47–57 is the 'HIGH' region element; that stretch reads PNVTGILHMGH. The 'KMSKS' region motif lies at 563–567; sequence KLSKS. Position 566 (Lys-566) interacts with ATP. Residues 874 to 939 adopt a coiled-coil conformation; it reads EHLAKERVRL…QSILDKLASL (66 aa).

Belongs to the class-I aminoacyl-tRNA synthetase family. ValS type 1 subfamily. In terms of assembly, monomer.

The protein resides in the cytoplasm. It carries out the reaction tRNA(Val) + L-valine + ATP = L-valyl-tRNA(Val) + AMP + diphosphate. In terms of biological role, catalyzes the attachment of valine to tRNA(Val). As ValRS can inadvertently accommodate and process structurally similar amino acids such as threonine, to avoid such errors, it has a 'posttransfer' editing activity that hydrolyzes mischarged Thr-tRNA(Val) in a tRNA-dependent manner. This is Valine--tRNA ligase from Chlamydia trachomatis serovar L2b (strain UCH-1/proctitis).